The primary structure comprises 3159 residues: E1A-binding protein p400 (3159 aa).

A compositionally biased stretch (polar residues) spans 1-16 (MHHGTGPQNVQHQLQR). Disordered stretches follow at residues 1-65 (MHHG…MNRS), 125-154 (SPLSQQVQTQSPTQPSPGPGQALQNVRAGA), 212-261 (PGTP…HITT), 282-359 (VLQG…PASP), 545-594 (LMPT…PQLP), 633-658 (QQPNVPIPAPPSSQLPIPPSQPAQLA), and 684-770 (TRLP…SQDT). Positions 31–41 (HPNPPPSPAAP) are enriched in pro residues. The span at 42–55 (FAPSASPSAPQSPS) shows a compositional bias: low complexity. Residue Ser-53 is modified to Phosphoserine. Polar residues predominate over residues 56–65 (YQIQQLMNRS). 2 stretches are compositionally biased toward low complexity: residues 125 to 137 (SPLSQQVQTQSPT) and 237 to 256 (LGPQSPAAAGGAGLQPLASP). Ser-135 carries the phosphoserine modification. Phosphoserine is present on residues Ser-315 and Ser-321. Residues 558–571 (QAAQLAGQRQSQQQ) show a composition bias toward low complexity. Residues 572-585 (YDPSTGPPVQNAAS) show a composition bias toward polar residues. 2 stretches are compositionally biased toward pro residues: residues 637-653 (VPIPAPPSSQLPIPPSQ) and 689-698 (DPAPPCPRPL). Residues 699–711 (PTSSTSSLAPVSG) are compositionally biased toward low complexity. 2 stretches are compositionally biased toward polar residues: residues 725–742 (NRPSSATNKALSPVTSRT) and 751–760 (TKPQSPAQNA). Phosphoserine occurs at positions 736 and 755. The span at 761–770 (TSSQDSSQDT) shows a compositional bias: low complexity. One can recognise an HSA domain in the interval 799–871 (LPKLQEAPRP…EQSRLRRIAA (73 aa)). Disordered regions lie at residues 915–967 (ELRP…GVVD) and 997–1024 (SSQWPRPKPDGEDTSGEEDADDCPGDRE). Phosphoserine is present on residues Ser-928 and Ser-941. Thr-945 is subject to Phosphothreonine. Acidic residues-rich tracts occupy residues 945-962 (TDDEVDDEEETIEEEEAN) and 1008-1019 (EDTSGEEDADDC). Positions 951–1365 (DEEETIEEEE…NVLSILVRLQ (415 aa)) are interactions with RUVBL1 and RUVBL2. A Phosphoserine modification is found at Ser-1011. One can recognise a Helicase ATP-binding domain in the interval 1103 to 1268 (AKLYRKNLNG…WTMVHFLVPG (166 aa)). 1116 to 1123 (DEAGLGKT) is an ATP binding site. A DEAH box-like motif is present at residues 1219-1222 (DEMQ). Residues 1467–1582 (VQYGQKPEGR…QAPSHAAGQS (116 aa)) form a disordered region. Position 1472 is an N6-acetyllysine (Lys-1472). Composition is skewed to low complexity over residues 1481–1498 (PSTHPPRTAAPTTASAAP) and 1538–1565 (PASASSTAASPAHPAKLRAQTTAQASTP). A phosphoserine mark is found at Ser-1547, Ser-1728, and Ser-1732. Positions 1787-1807 (GSLDGRRGKEAGPAHSYTSSS) are disordered. Basic and acidic residues predominate over residues 1789 to 1798 (LDGRRGKEAG). A Helicase C-terminal domain is found at 1899 to 2056 (KLEALAILLQ…GNDYSMAFLT (158 aa)). Disordered stretches follow at residues 2119-2144 (KSAQEGVLGPHTDALSSDSENMPCDE) and 2287-2311 (KERKRHKTDPSAAGRKKKQRHGEAV). Lys-2349 and Lys-2356 each carry N6-acetyllysine. The Myb-like domain maps to 2360–2429 (EPGQDNPEWL…QCRNRYENVI (70 aa)). 2 disordered regions span residues 2524–2602 (KEKK…AQPA) and 2665–2688 (TPGGSAPAQVVHTQPPPRAVGSPA). An interaction with ZNF42 region spans residues 2524–2789 (KEKKALADQQ…QQQQQTTTTS (266 aa)). Residues 2530-2540 (ADQQKAQQPAV) are compositionally biased toward low complexity. Composition is skewed to pro residues over residues 2541 to 2563 (AQPPPPQPQPPPPPQQPPPPLPQ) and 2572 to 2589 (PAGPPAVQPQPQPQPQTQ). Low complexity predominate over residues 2590–2602 (PQPVQAPAKAQPA). Residue Ser-2686 is modified to Phosphoserine. At Thr-2813 the chain carries Phosphothreonine. Disordered regions lie at residues 2821–2869 (QKQK…TAPR) and 3115–3159 (APLQ…PPCQ). Residues 2828-2843 (PPQPPPPQAQSAPPQP) show a composition bias toward pro residues. Low complexity predominate over residues 2844–2866 (TAQVQVQTSQPPQQQSPQLTTVT). Polar residues predominate over residues 3129 to 3140 (PASSDSPSQQPK).

This sequence belongs to the SNF2/RAD54 helicase family. SWR1 subfamily. As to quaternary structure, component of the NuA4 histone acetyltransferase complex which contains the catalytic subunit KAT5/TIP60 and the subunits EP400, TRRAP/PAF400, BRD8/SMAP, EPC1, DMAP1/DNMAP1, RUVBL1/TIP49, RUVBL2, ING3, actin, ACTL6A/BAF53A, MORF4L1/MRG15, MORF4L2/MRGX, MRGBP, YEATS4/GAS41, VPS72/YL1 and MEAF6. May also participate in the formation of NuA4 related complexes which lack the KAT5/TIP60 catalytic subunit, but which include the SWI/SNF related protein SRCAP. The NuA4 complex interacts with MYC and the adenovirus E1A protein. EP400 interacts with TRRAP, RUVBL1 and RUVBL2. Component of a SWR1-like complex. Interacts with ZNF42. Interacts with PHF5A. Interacts with human cytomegalovirus UL27. Interacts with human adenovirus 5 E1A protein; this interaction stabilizes MYC. In terms of tissue distribution, ubiquitously expressed.

The protein resides in the nucleus. Functionally, component of the NuA4 histone acetyltransferase complex which is involved in transcriptional activation of select genes principally by acetylation of nucleosomal histones H4 and H2A. This modification may both alter nucleosome - DNA interactions and promote interaction of the modified histones with other proteins which positively regulate transcription. May be required for transcriptional activation of E2F1 and MYC target genes during cellular proliferation. The NuA4 complex ATPase and helicase activities seem to be, at least in part, contributed by the association of RUVBL1 and RUVBL2 with EP400. May regulate ZNF42 transcription activity. Component of a SWR1-like complex that specifically mediates the removal of histone H2A.Z/H2AZ1 from the nucleosome. The chain is E1A-binding protein p400 (EP400) from Homo sapiens (Human).